We begin with the raw amino-acid sequence, 701 residues long: F-box/LRR-repeat protein 17 (701 aa).

Residues 1–11 (MGHLLSKEPRN) are compositionally biased toward basic and acidic residues. 3 disordered regions span residues 1-20 (MGHLLSKEPRNRPSQKRPRC), 72-94 (APAGPEEEPPLSPPPRDGAYAAA), and 227-300 (GGGG…DADC). Gly residues predominate over residues 227-237 (GGGGGPAGGGA). Pro residues predominate over residues 252-264 (EQPPQPLCPPPSS). Residues 318-365 (TPDINQLPPSILLKIFSNLSLDERCLSASLVCKYWRDLCLDFQFWKQL) form the F-box domain.

It belongs to the FBXL17 family. As to quaternary structure, part of the SCF (SKP1-CUL1-F-box) E3 ubiquitin-protein ligase complex SCF(FBXL17) composed of CUL1, SKP1, RBX1 and FBXL17. Interacts with BTB domain-containing proteins such as KLHL12, BCL6 and BACH1; specifically recognizes and binds a conserved degron of non-consecutive residues present at the interface of BTB dimers of aberrant composition. Interacts with SUFU. Interacts with PRMT1.

The protein localises to the cytoplasm. The protein resides in the nucleus. Functionally, substrate-recognition component of the SCF(FBXL17) E3 ubiquitin ligase complex, a key component of a quality control pathway required to ensure functional dimerization of BTB domain-containing proteins (dimerization quality control, DQC). FBXL17 specifically recognizes and binds a conserved degron of non-consecutive residues present at the interface of BTB dimers of aberrant composition: aberrant BTB dimer are then ubiquitinated by the SCF(FBXL17) complex and degraded by the proteasome. The ability of the SCF(FBXL17) complex to eliminate compromised BTB dimers is required for the differentiation and survival of neural crest and neuronal cells. The SCF(FBXL17) complex mediates ubiquitination and degradation of BACH1. The SCF(FBXL17) complex is also involved in the regulation of the hedgehog/smoothened (Hh) signaling pathway by mediating the ubiquitination and degradation of SUFU, allowing the release of GLI1 from SUFU for proper Hh signal transduction. The SCF(FBXL17) complex mediates ubiquitination and degradation of PRMT1. The protein is F-box/LRR-repeat protein 17 of Homo sapiens (Human).